The primary structure comprises 502 residues: ATP synthase subunit alpha (502 aa).

169–176 (GDRQTGKT) serves as a coordination point for ATP.

The protein belongs to the ATPase alpha/beta chains family. F-type ATPases have 2 components, CF(1) - the catalytic core - and CF(0) - the membrane proton channel. CF(1) has five subunits: alpha(3), beta(3), gamma(1), delta(1), epsilon(1). CF(0) has three main subunits: a(1), b(2) and c(9-12). The alpha and beta chains form an alternating ring which encloses part of the gamma chain. CF(1) is attached to CF(0) by a central stalk formed by the gamma and epsilon chains, while a peripheral stalk is formed by the delta and b chains.

It is found in the cell inner membrane. The enzyme catalyses ATP + H2O + 4 H(+)(in) = ADP + phosphate + 5 H(+)(out). In terms of biological role, produces ATP from ADP in the presence of a proton gradient across the membrane. The alpha chain is a regulatory subunit. This Thermodesulfovibrio yellowstonii (strain ATCC 51303 / DSM 11347 / YP87) protein is ATP synthase subunit alpha.